Reading from the N-terminus, the 124-residue chain is Small ribosomal subunit protein uS12 (124 aa).

The segment at 1 to 22 (MATVNQLVRKPRKRKVAKSDVP) is disordered. At Asp-89 the chain carries 3-methylthioaspartic acid. Positions 99-124 (RGSLDTSGVQNRKQGRSKYGTKRPKK) are disordered. Over residues 111 to 124 (KQGRSKYGTKRPKK) the composition is skewed to basic residues.

The protein belongs to the universal ribosomal protein uS12 family. Part of the 30S ribosomal subunit. Contacts proteins S8 and S17. May interact with IF1 in the 30S initiation complex.

Its function is as follows. With S4 and S5 plays an important role in translational accuracy. In terms of biological role, interacts with and stabilizes bases of the 16S rRNA that are involved in tRNA selection in the A site and with the mRNA backbone. Located at the interface of the 30S and 50S subunits, it traverses the body of the 30S subunit contacting proteins on the other side and probably holding the rRNA structure together. The combined cluster of proteins S8, S12 and S17 appears to hold together the shoulder and platform of the 30S subunit. The polypeptide is Small ribosomal subunit protein uS12 (Marinomonas sp. (strain MWYL1)).